The primary structure comprises 603 residues: NAD 5'-nucleotidase (603 aa).

Positions methionine 1–alanine 25 are cleaved as a signal peptide. Zn(2+) contacts are provided by aspartate 44, histidine 46, aspartate 94, asparagine 126, and histidine 227. Substrate contacts are provided by residues arginine 397, arginine 437, phenylalanine 456, and tyrosine 540–aspartate 546.

The protein belongs to the 5'-nucleotidase family. Zn(2+) serves as cofactor.

It is found in the periplasm. The enzyme catalyses a ribonucleoside 5'-phosphate + H2O = a ribonucleoside + phosphate. Degrades NAD into adenosine and nicotinamide riboside, the latter being subsequently internalized by a specific permease. Also endowed with NAD(P) pyrophosphatase activity. Exhibits a broad substrate specificity, recognizing either mono- or dinucleotide nicotinamides and different adenosine phosphates with a maximal activity on 5'-adenosine monophosphate. The polypeptide is NAD 5'-nucleotidase (Haemophilus influenzae (strain ATCC 51907 / DSM 11121 / KW20 / Rd)).